The primary structure comprises 355 residues: Double-stranded RNA-binding protein 4 (355 aa).

2 consecutive DRBM domains span residues 4–73 (VYKG…SLTP) and 82–150 (AYKN…SIKN). Residues 149–188 (KNGNSNQTGSPTLPSERQEDVNSNVKSSPQEIHSQPSSKV) are compositionally biased toward polar residues. The interval 149-193 (KNGNSNQTGSPTLPSERQEDVNSNVKSSPQEIHSQPSSKVVMTPD) is disordered.

As to quaternary structure, heterodimer with DRB1 or DRB5. Interacts with DCL4 and cauliflower mosaic virus (CaMV) transactivator/viroplasmin protein. Interaction with CaMV transactivator/viroplasmin protein inhibits RNA silencing ability of DRB4. In terms of tissue distribution, expressed in roots, leaf vasculature, shoot apical meristem (SAM) and developing anthers.

It localises to the nucleus. Double-stranded RNA-binding protein involved in RNA-mediated post-transcriptional gene silencing (PTGS). Functions in the trans-acting small interfering RNAs (ta-siRNAs) biogenesis by binding and assisting DICER-LIKE 4 (DCL4). Required for DCL4 activity. Required for the 21 nucleotide ta-siRNAs production of the TAS3 transcript in leaves but not in flowers. Plays an important role in silencing RNA of both DNA and RNA viruses. Involved with argonaute 7 (AGO7) and RDR6 in turnip crinkle virus (TCV) silencing. May not be directly involved in viral siRNA production. May stabilize the 21 nucleotide viral siRNAs and deliver them to the RISC complex. Targeted by the viral silencing suppressor (VSR) transactivator/viroplasmin (TAV) protein of the cauliflower mosaic virus (CaMV) that inactivates DRB4 function in RNA silencing. Probably not involved in the guide strand selection from RNA duplexes. Involved in leaf morphology through its function in ta-siRNA-mediated silencing. The sequence is that of Double-stranded RNA-binding protein 4 (DBR4) from Arabidopsis thaliana (Mouse-ear cress).